Here is a 108-residue protein sequence, read N- to C-terminus: Nucleoid-associated protein GK0018 (108 aa).

The segment at 1 to 32 is disordered; that stretch reads MMRGGMGNMQKMLKQMQKMQKEMQKAQEELAE. Residues 9–18 show a composition bias toward low complexity; that stretch reads MQKMLKQMQK. Positions 19-32 are enriched in basic and acidic residues; that stretch reads MQKEMQKAQEELAE.

It belongs to the YbaB/EbfC family. Homodimer.

The protein resides in the cytoplasm. It localises to the nucleoid. Its function is as follows. Binds to DNA and alters its conformation. May be involved in regulation of gene expression, nucleoid organization and DNA protection. This chain is Nucleoid-associated protein GK0018, found in Geobacillus kaustophilus (strain HTA426).